Consider the following 152-residue polypeptide: Large ribosomal subunit protein uL15 (152 aa).

Residues 1-54 (MGLKLNELSPGVGAKKTAHRKGRGIGSGLGKTGGRGVKGQKSRSGSGVRRGFEG) are disordered. Positions 24 to 37 (GIGSGLGKTGGRGV) are enriched in gly residues.

It belongs to the universal ribosomal protein uL15 family. In terms of assembly, part of the 50S ribosomal subunit.

Binds to the 23S rRNA. This chain is Large ribosomal subunit protein uL15, found in Psychrobacter sp. (strain PRwf-1).